The primary structure comprises 389 residues: Trans-2-enoyl-CoA reductase [NADH] (389 aa).

Residues 47 to 52 (GASTGY), 73 to 74 (FE), 110 to 111 (DA), and 138 to 139 (LA) contribute to the NAD(+) site. Tyrosine 224 contacts substrate. The Proton donor role is filled by tyrosine 234. NAD(+) contacts are provided by residues lysine 243 and 272-274 (LVT).

Belongs to the TER reductase family. Monomer.

The enzyme catalyses a 2,3-saturated acyl-CoA + NAD(+) = a (2E)-enoyl-CoA + NADH + H(+). The protein operates within lipid metabolism; fatty acid biosynthesis. Functionally, involved in the fatty acid synthesis (FAS II). Catalyzes the reduction of a carbon-carbon double bond in an enoyl moiety that is covalently linked to a coenzyme A (CoA). This chain is Trans-2-enoyl-CoA reductase [NADH], found in Clostridium perfringens (strain ATCC 13124 / DSM 756 / JCM 1290 / NCIMB 6125 / NCTC 8237 / Type A).